Here is a 413-residue protein sequence, read N- to C-terminus: Serine hydroxymethyltransferase (413 aa).

(6S)-5,6,7,8-tetrahydrofolate contacts are provided by residues Leu117 and 121 to 123; that span reads GHL. N6-(pyridoxal phosphate)lysine is present on Lys226. (6S)-5,6,7,8-tetrahydrofolate contacts are provided by residues Glu239 and 349–351; that span reads SPF.

Belongs to the SHMT family. As to quaternary structure, homodimer. Requires pyridoxal 5'-phosphate as cofactor.

It is found in the cytoplasm. The catalysed reaction is (6R)-5,10-methylene-5,6,7,8-tetrahydrofolate + glycine + H2O = (6S)-5,6,7,8-tetrahydrofolate + L-serine. It functions in the pathway one-carbon metabolism; tetrahydrofolate interconversion. It participates in amino-acid biosynthesis; glycine biosynthesis; glycine from L-serine: step 1/1. Catalyzes the reversible interconversion of serine and glycine with tetrahydrofolate (THF) serving as the one-carbon carrier. This reaction serves as the major source of one-carbon groups required for the biosynthesis of purines, thymidylate, methionine, and other important biomolecules. Also exhibits THF-independent aldolase activity toward beta-hydroxyamino acids, producing glycine and aldehydes, via a retro-aldol mechanism. In Bacillus cereus (strain AH187), this protein is Serine hydroxymethyltransferase.